We begin with the raw amino-acid sequence, 224 residues long: Small ribosomal subunit protein uS3 (224 aa).

The 69-residue stretch at isoleucine 38–lysine 106 folds into the KH type-2 domain.

Belongs to the universal ribosomal protein uS3 family. As to quaternary structure, part of the 30S ribosomal subunit. Forms a tight complex with proteins S10 and S14.

Its function is as follows. Binds the lower part of the 30S subunit head. Binds mRNA in the 70S ribosome, positioning it for translation. The chain is Small ribosomal subunit protein uS3 from Lactobacillus acidophilus (strain ATCC 700396 / NCK56 / N2 / NCFM).